A 37-amino-acid polypeptide reads, in one-letter code: Large ribosomal subunit protein bL36 (37 aa).

This sequence belongs to the bacterial ribosomal protein bL36 family.

This is Large ribosomal subunit protein bL36 from Thermus thermophilus (strain ATCC BAA-163 / DSM 7039 / HB27).